Reading from the N-terminus, the 462-residue chain is Asparagine--tRNA ligase (462 aa).

The protein belongs to the class-II aminoacyl-tRNA synthetase family. In terms of assembly, homodimer.

The protein resides in the cytoplasm. The catalysed reaction is tRNA(Asn) + L-asparagine + ATP = L-asparaginyl-tRNA(Asn) + AMP + diphosphate + H(+). The protein is Asparagine--tRNA ligase of Borreliella burgdorferi (strain ATCC 35210 / DSM 4680 / CIP 102532 / B31) (Borrelia burgdorferi).